The chain runs to 590 residues: FAD-linked oxidoreductase malF (590 aa).

Positions 1–18 (MKYTATFALLILAIGIQT) are cleaved as a signal peptide. Asn-44, Asn-80, Asn-103, Asn-178, and Asn-396 each carry an N-linked (GlcNAc...) asparagine glycan. The 187-residue stretch at 117 to 303 (AQGRIPLYSA…TSVTLRAFAD (187 aa)) folds into the FAD-binding PCMH-type domain.

The protein belongs to the oxygen-dependent FAD-linked oxidoreductase family. FAD is required as a cofactor.

FAD-linked oxidoreductase; part of the gene cluster that mediates the biosynthesis of malbrancheamide, a dichlorinated fungal indole alkaloid that belongs to a family of natural products containing a characteristic bicyclo[2.2.2]diazaoctane core. The first step of malbrancheamide biosynthesis involves coupling of L-proline and L-tryptophan by malG, a bimodular NRPS, to produce L-Pro-L-Trp aldehyde through reductive offloading. This compound undergoes spontaneous cyclization and dehydration to give a dienamine which is reverse prenylated at C-2 by malE. The other prenyltransferase present in the cluster, malB, displays modest activity, suggesting that may be a redundant gene in the pathway. Subsequently, a [4+2] Diels-Alder cyclo-addition catalyzed by the bifunctional enzyme malC forms the characteristic bicyclo[2.2.2]diazaoctane ring of premalbrancheamid. Finally, the flavin-dependent halogenase malA catalyzes the iterative dichlorination of the indole ring of premalbrancheamide to yield C-9 monochlorinated malbrancheamide B, C-8 monochlorinated isomalbrancheamide B, and dichlorinated malbrancheamide. MalA is also able to brominate premalbrancheamide at C-9 to yield malbrancheamide C, and, to a lesser extend, at C-8 to yield isomalbrancheamide C. Finally, malA can brominate C-9 monochlorinated malbrancheamide B at C-8 to yield malbrancheamide D, or C-8 monochlorinated isomalbrancheamide B at C-9 to produce isomalbrancheamide D. The polypeptide is FAD-linked oxidoreductase malF (Malbranchea aurantiaca).